Reading from the N-terminus, the 298-residue chain is Acetylglutamate kinase (298 aa).

Substrate-binding positions include 69-70 (GG), R91, and N196.

This sequence belongs to the acetylglutamate kinase family. ArgB subfamily.

It localises to the cytoplasm. The catalysed reaction is N-acetyl-L-glutamate + ATP = N-acetyl-L-glutamyl 5-phosphate + ADP. The protein operates within amino-acid biosynthesis; L-arginine biosynthesis; N(2)-acetyl-L-ornithine from L-glutamate: step 2/4. Functionally, catalyzes the ATP-dependent phosphorylation of N-acetyl-L-glutamate. The protein is Acetylglutamate kinase of Nitrobacter winogradskyi (strain ATCC 25391 / DSM 10237 / CIP 104748 / NCIMB 11846 / Nb-255).